A 343-amino-acid chain; its full sequence is Protein RecA (343 aa).

66 to 73 (GPESSGKT) is an ATP binding site.

The protein belongs to the RecA family.

It localises to the cytoplasm. Can catalyze the hydrolysis of ATP in the presence of single-stranded DNA, the ATP-dependent uptake of single-stranded DNA by duplex DNA, and the ATP-dependent hybridization of homologous single-stranded DNAs. It interacts with LexA causing its activation and leading to its autocatalytic cleavage. The chain is Protein RecA from Dechloromonas aromatica (strain RCB).